Here is a 322-residue protein sequence, read N- to C-terminus: Malate dehydrogenase (322 aa).

NAD(+)-binding positions include 10–15 (GSGQIG) and aspartate 34. Substrate contacts are provided by arginine 83 and arginine 89. Residues asparagine 96 and 119–121 (ITN) contribute to the NAD(+) site. Residues asparagine 121 and arginine 152 each contribute to the substrate site. Catalysis depends on histidine 176, which acts as the Proton acceptor.

It belongs to the LDH/MDH superfamily. MDH type 3 family.

The catalysed reaction is (S)-malate + NAD(+) = oxaloacetate + NADH + H(+). Functionally, catalyzes the reversible oxidation of malate to oxaloacetate. This chain is Malate dehydrogenase, found in Rhodopseudomonas palustris (strain HaA2).